The chain runs to 406 residues: Cytochrome P450 165C4 (406 aa).

Position 356 (Cys-356) interacts with heme.

Belongs to the cytochrome P450 family. Heme is required as a cofactor.

It participates in antibiotic biosynthesis; vancomycin biosynthesis. Its function is as follows. Involved in the coupling of aromatic side chains of the heptapeptide of vancomycin. The chain is Cytochrome P450 165C4 (cyp165C4) from Amycolatopsis orientalis (Nocardia orientalis).